The chain runs to 723 residues: Probable alpha-fucosidase A (723 aa).

The first 15 residues, 1–15 (MRSLVLLGMSSLATA), serve as a signal peptide directing secretion. N-linked (GlcNAc...) asparagine glycans are attached at residues Asn-77, Asn-98, Asn-117, Asn-171, Asn-194, Asn-243, Asn-334, Asn-558, Asn-566, and Asn-595.

Belongs to the glycosyl hydrolase 95 family.

The protein resides in the secreted. The catalysed reaction is an alpha-L-fucoside + H2O = L-fucose + an alcohol. Alpha-fucosidase involved in degradation of fucosylated xyloglucans. Hydrolyzes alpha-1,2-linked fucose. In Aspergillus oryzae (strain ATCC 42149 / RIB 40) (Yellow koji mold), this protein is Probable alpha-fucosidase A (afcA).